Consider the following 434-residue polypeptide: MARTDIARRVYNHAWKLDPIIRSLIDTDFYKLLMLQMIWKLYPDVNASFTLINRTKRVRLADEIDEGELREQLDHARTLKLSKKEMIWLAGNSFYGRAQIFEPEFLAWLSNFQLPEYELSKKDGQYVLDFHGSWKETTMWEIPALAIVNELRSRSAMRALGPFTLDVLYARAKAKMWSKVERLKELPGLRISDFGTRRRHSFLWQRWCVEALKEGIGPAFTGTSNVLLAMDSDLEAVGTNAHELPMVAAALAQTDEQLRNAPYKILRDWNKLYGGNLLIVLPDAFGTAAFLRDAPEWVADWTGFRPDSAPPIEGGEKIIDWWKKMGRDPRQKLLIFSDGLDVDAIIDTYRHFEGRVRMSFGWGTNLTNDFSGCAPTEISGLNPISVVCKVSDADGRPAVKLSDNPQKATGDPAEVERYLKFFGAEDRIDQTVLV.

At His-242 the chain carries Phosphohistidine; by autocatalysis.

The protein belongs to the NAPRTase family. In terms of processing, transiently phosphorylated on a His residue during the reaction cycle. Phosphorylation strongly increases the affinity for substrates and increases the rate of nicotinate D-ribonucleotide production. Dephosphorylation regenerates the low-affinity form of the enzyme, leading to product release.

The catalysed reaction is nicotinate + 5-phospho-alpha-D-ribose 1-diphosphate + ATP + H2O = nicotinate beta-D-ribonucleotide + ADP + phosphate + diphosphate. It functions in the pathway cofactor biosynthesis; NAD(+) biosynthesis; nicotinate D-ribonucleotide from nicotinate: step 1/1. In terms of biological role, catalyzes the synthesis of beta-nicotinate D-ribonucleotide from nicotinate and 5-phospho-D-ribose 1-phosphate at the expense of ATP. The chain is Nicotinate phosphoribosyltransferase from Rhizobium leguminosarum bv. trifolii (strain WSM2304).